We begin with the raw amino-acid sequence, 510 residues long: Glycerol kinase (510 aa).

Thr-12 is an ADP binding site. Positions 12, 13, and 14 each coordinate ATP. Thr-12 serves as a coordination point for sn-glycerol 3-phosphate. Residue Arg-16 coordinates ADP. Arg-82, Glu-83, and Tyr-134 together coordinate sn-glycerol 3-phosphate. Residues Arg-82, Glu-83, and Tyr-134 each coordinate glycerol. Phosphohistidine; by HPr is present on His-230. Residue Asp-244 coordinates sn-glycerol 3-phosphate. Glycerol contacts are provided by Asp-244 and Gln-245. Thr-266 and Gly-309 together coordinate ADP. The ATP site is built by Thr-266, Gly-309, Gln-313, and Gly-410. Positions 410 and 414 each coordinate ADP.

Belongs to the FGGY kinase family. As to quaternary structure, homotetramer and homodimer (in equilibrium). Post-translationally, the phosphoenolpyruvate-dependent sugar phosphotransferase system (PTS), including enzyme I, and histidine-containing protein (HPr) are required for the phosphorylation, which leads to the activation of the enzyme.

The enzyme catalyses glycerol + ATP = sn-glycerol 3-phosphate + ADP + H(+). It functions in the pathway polyol metabolism; glycerol degradation via glycerol kinase pathway; sn-glycerol 3-phosphate from glycerol: step 1/1. Its activity is regulated as follows. Activated by phosphorylation and inhibited by fructose 1,6-bisphosphate (FBP). In terms of biological role, key enzyme in the regulation of glycerol uptake and metabolism. Catalyzes the phosphorylation of glycerol to yield sn-glycerol 3-phosphate. This Bacillus cereus (strain ATCC 10987 / NRS 248) protein is Glycerol kinase.